Consider the following 305-residue polypeptide: Aurasperone B biosynthesis cluster protein A (305 aa).

A signal peptide spans 1–26 (MSIFFSIRFWPAAISAAILWLPQVLG). 8 N-linked (GlcNAc...) asparagine glycosylation sites follow: Asn29, Asn34, Asn64, Asn83, Asn132, Asn183, Asn218, and Asn288.

The protein belongs to the bfoA family.

Functionally, part of the gene cluster that mediates the biosynthesis of aurasperone B, a dimeric gamma-naphthopyrone. The first step in the biosynthesis of aurasperone B is the production of gamma-naphthopyrone precursor YWA1 by the non-reducing polyketide synthase albA, via condensation of one acetyl-CoA starter unit with 6 malonyl-CoA units. YWA1 is then methylated by aunE at position C-6 to yield foncesin which is further methylated at position C-8 by aunD to produce fonsecin B. A key enzyme in the biosynthetic pathway is the cytochrome P450 monooxygenase aunB which catalyzes the oxidative dimerization of fonsecin B to aurasperone B. AunB also catalyzes the oxidative dimerization of rubrofusarin B into aurasperone A. In Aspergillus niger (strain ATCC MYA-4892 / CBS 513.88 / FGSC A1513), this protein is Aurasperone B biosynthesis cluster protein A.